Reading from the N-terminus, the 532-residue chain is Flavin-containing monooxygenase 3 (532 aa).

Residues Gly-9–Ser-13, Glu-32, Leu-40–Trp-41, and Asn-61–Ser-62 each bind FAD. NADP(+) is bound by residues Ser-60–Asn-61 and Ser-195–Asp-198. Residue Ser-401 is modified to Phosphoserine. Residues Phe-510–Val-530 traverse the membrane as a helical segment.

Belongs to the FMO family. FAD is required as a cofactor. In terms of tissue distribution, liver.

The protein localises to the microsome membrane. Its subcellular location is the endoplasmic reticulum membrane. The catalysed reaction is trimethylamine + NADPH + O2 = trimethylamine N-oxide + NADP(+) + H2O. It catalyses the reaction N,N-dimethylaniline + NADPH + O2 + H(+) = N,N-dimethylaniline N-oxide + NADP(+) + H2O. It carries out the reaction hypotaurine + NADPH + O2 + H(+) = taurine + NADP(+) + H2O. The enzyme catalyses (S)-nicotine + NADPH + O2 = trans-(S)-nicotine N(1')-oxide + NADP(+) + H2O. The catalysed reaction is albendazole + NADPH + O2 + H(+) = albendazole S-oxide + NADP(+) + H2O. Its function is as follows. Essential hepatic enzyme that catalyzes the oxygenation of a wide variety of nitrogen- and sulfur-containing compounds including drugs as well as dietary compounds. Plays an important role in the metabolism of trimethylamine (TMA), via the production of trimethylamine N-oxide (TMAO) metabolite. TMA is generated by the action of gut microbiota using dietary precursors such as choline, choline containing compounds, betaine or L-carnitine. By regulating TMAO concentration, FMO3 directly impacts both platelet responsiveness and rate of thrombus formation. This is Flavin-containing monooxygenase 3 (FMO3) from Homo sapiens (Human).